The primary structure comprises 1915 residues: Methylcytosine dioxygenase tet3-B (1915 aa).

Residues 28–49 (RLRVSEMPSELNGGGDGSKGDG) are disordered. A CXXC-type zinc finger spans residues 61–102 (SNKKRKRCGVCVPCLRKEPCGTCYNCVNRSTSHQICKMRKCE). Zn(2+) is bound by residues C68, C71, C74, C80, C83, C86, C96, and C101. Residues 629-638 (PNSQQAPVSK) show a composition bias toward polar residues. 3 disordered regions span residues 629–679 (PNSQ…RVKE), 776–806 (GRCP…VPGQ), and 831–880 (FSLP…LSNN). The segment covering 664-676 (KPPRKQVQIKKPR) has biased composition (basic residues). A compositionally biased stretch (low complexity) spans 779 to 793 (PTPSTGDSSSGQGDS). Composition is skewed to polar residues over residues 838 to 854 (VPSQ…TSGV) and 864 to 880 (QLPS…LSNN). C974, C976, C1034, H1060, and C1062 together coordinate Zn(2+). Residue R1102 participates in 2-oxoglutarate binding. The Zn(2+) site is built by C1112, C1114, C1130, C1139, and C1199. C1215 serves as a coordination point for 2-oxoglutarate. Residue H1221 coordinates Zn(2+). H1223 and D1225 together coordinate Fe cation. A 2-oxoglutarate-binding site is contributed by H1257. Disordered regions lie at residues 1298–1356 (LSEP…QTKP), 1469–1516 (GMNQ…APME), and 1719–1753 (PAVN…VKEE). Positions 1308–1339 (RQLDAKKATAEKKKLQKEKLVSPDKTKQEPSD) are enriched in basic and acidic residues. Over residues 1340–1355 (TKTCQQNPGVPQQQTK) the composition is skewed to polar residues. The span at 1482-1491 (NYRRSSEVPH) shows a compositional bias: basic and acidic residues. Composition is skewed to polar residues over residues 1494 to 1503 (SLQNSNSQKS) and 1720 to 1732 (AVNS…SQNH). Fe cation is bound at residue H1794. 1809-1811 (RIS) is a binding site for 2-oxoglutarate. Residues 1827 to 1860 (LALWEAKMKQLAERARVKEEEAAKLGIKQEVKSL) adopt a coiled-coil conformation.

This sequence belongs to the TET family. Fe(2+) serves as cofactor. The cofactor is Zn(2+). As to expression, detected in embryo (at protein level). Detected in embryonic head, in developing brain and eye.

The protein resides in the nucleus. Its subcellular location is the chromosome. The catalysed reaction is a 5-methyl-2'-deoxycytidine in DNA + 2-oxoglutarate + O2 = a 5-hydroxymethyl-2'-deoxycytidine in DNA + succinate + CO2. It carries out the reaction a 5-hydroxymethyl-2'-deoxycytidine in DNA + 2-oxoglutarate + O2 = a 5-formyl-2'-deoxycytidine in DNA + succinate + CO2 + H2O. The enzyme catalyses a 5-formyl-2'-deoxycytidine in DNA + 2-oxoglutarate + O2 = a 5-carboxyl-2'-deoxycytidine in DNA + succinate + CO2 + H(+). Functionally, dioxygenase that catalyzes the conversion of the modified genomic base 5-methylcytosine (5mC) into 5-hydroxymethylcytosine (5hmC) and plays a key role in epigenetic chromatin reprogramming during embryonic development. Conversion of 5mC into 5hmC probably constitutes the first step in cytosine demethylation. Selectively binds to the promoter region of target genes and contributes to regulate the expression of numerous developmental genes, including pax6, rax, sox9 and six3. May also contribute to the regulation of target genes in ways that do not require its enzyme activity. The chain is Methylcytosine dioxygenase tet3-B from Xenopus laevis (African clawed frog).